The primary structure comprises 551 residues: ETS domain-containing transcription factor ERF (551 aa).

Phosphothreonine occurs at positions 3 and 7. 2 positions are modified to phosphoserine: serine 20 and serine 24. A DNA-binding region (ETS) is located at residues 27–107 (IQLWHFILEL…KGKRFTYKFN (81 aa)). Disordered regions lie at residues 130–169 (QSAP…SSSS) and 184–304 (GSVS…SHFS). A phosphoserine mark is found at serine 185 and serine 190. The segment covering 239–250 (RGGPEPLSPFPV) has biased composition (pro residues). Positions 251–268 (SPLAGPGSLLPPQLSPAL) are enriched in low complexity. A compositionally biased stretch (gly residues) spans 289–301 (SGGGGPSGSGGGS). Serine 327 carries the post-translational modification Phosphoserine. Residues 342–476 (PQRPDKCPLP…KPEPGEAPGV (135 aa)) are disordered. Residues 348 to 361 (CPLPPMAPETPPVP) are compositionally biased toward pro residues. Positions 362–373 (SSASSSSSSSSS) are enriched in low complexity. The segment covering 404–413 (GGSGSGGLAE) has biased composition (gly residues). Serine 433 and serine 437 each carry phosphoserine. Over residues 433 to 453 (SEGESEEVEVTDISDEDEEDG) the composition is skewed to acidic residues. Phosphothreonine is present on threonine 443. Phosphoserine is present on serine 446. Glycyl lysine isopeptide (Lys-Gly) (interchain with G-Cter in SUMO2) cross-links involve residues lysine 467, lysine 483, and lysine 514. The tract at residues 495–551 (RLEGGGCLSGGPEDEGEDKKVRGDVGPGESGGPLTPRRVSSDLQHATAQLSLEHRDS) is disordered. Phosphothreonine; by MAPK1 is present on threonine 529. Serine 534, serine 535, and serine 551 each carry phosphoserine. The segment covering 535–544 (SDLQHATAQL) has biased composition (polar residues).

Belongs to the ETS family. Phosphorylated by multiple kinases including MAPK1/ERK2 at THR-529. Phosphorylation regulates the activity of ERF. In terms of tissue distribution, expressed along the osteogenic margins of the developing calvarial bones, in a similar distribution to that observed for the master osteogenic regulator RUNX2.

The protein resides in the nucleus. Functionally, potent transcriptional repressor that binds to the H1 element of the Ets2 promoter. May regulate other genes involved in cellular proliferation. Required for extraembryonic ectoderm differentiation, ectoplacental cone cavity closure, and chorioallantoic attachment. May be important for regulating trophoblast stem cell differentiation. The sequence is that of ETS domain-containing transcription factor ERF (Erf) from Mus musculus (Mouse).